The primary structure comprises 140 residues: METVIMITYWDLISHSEMFSDSYMSQEIADGLRLEVEGKIVSRTEGNIFDSLIGGNASAEGPEGKGTESTVITGVDSVMNHHLQETSFTKEAYNKCIKDYMKSIKGKLEEQRPKRVKPFMTGAAEQIKHILANFKNYQKT.

The 135-residue stretch at 6-140 (MITYWDLISH…LANFKNYQKT (135 aa)) folds into the TCTP domain.

The protein belongs to the TCTP family.

The chain is TPT1-like protein from Homo sapiens (Human).